The chain runs to 375 residues: uncharacterized protein (375 aa).

A Radical SAM core domain is found at 78-302 (KKIEITSTIH…IFPNIRITSP (225 aa)). [4Fe-4S] cluster-binding residues include cysteine 92, cysteine 98, and cysteine 101.

[4Fe-4S] cluster serves as cofactor.

This is an uncharacterized protein from Methanocaldococcus jannaschii (strain ATCC 43067 / DSM 2661 / JAL-1 / JCM 10045 / NBRC 100440) (Methanococcus jannaschii).